The following is a 1893-amino-acid chain: MKAMPWNWTCLLSHLLVVGMGSSTLLPRQPPQLSQKPSFVTFRGEPAEGFNHLVVDERTGHIYLGAVNRIYKLSSDLKVLVTHQTGPDEDNPKCYPPRIVQTCNEPLASTNNVNKMLLIDYKENRLIACGSLYQGICKLLRLEDLFKLGEPFHKKEHYLSGVNESGSVFGVIVSYSNFDDKLFIATAVDGKPEYFPTISSRKLTKNSEADGMFAYVFHDEFVASMIKIPSDTFTVIPDFDIYYVYGFSSGNFVYFLTLQPEMVSPPGSTTKEQVYTSKLVRLCKEDTAFNSYVEVPIGCERNGVEYRLLQAAYLSKAGAVLGRTLGVRPDDDLLFTVFSKGQKRKMKSLDESALCIFILKQINDRIKDRLQSCYRGEGTLDLAWLKVKDIPCSSALLTIDDNFCGLDMNAPLGVSEMVRGIPVFTEDRDRMTSVIAYVYKNHSLAFVGTKSGKLKKIRVDGPKGNALQYETVQVVDSGPVLRDMAFSKDHEQLYIMSERQLTRVPVESCGQYRSCGECLGSGDPHCGWCVLHNTCTRKERCERSREPRRFASEMKQCVRLTVHPNNISVSQYNVLLVLETYNVPELSAGVNCTFEDLSEMDGLVIGNQIQCYSPAAKEVPRIITENGDHHVVQLQLKSKETGMTFASTSFVFYNCSVHNSCLSCVESPYRCHWCKYRHVCTHDPNTCSFQEGRVKLPEDCPQLLRVDKILVPVEVIKPITLKAKNLPQPQSGQRGYECILNIQGIEQRVPALRFNSSSVQCQNTSYSYEGMEINNLPVELTVVWNGHFNIDNPAQNKVYLYKCGAMRESCGLCLKADPDFECGWCQSPGQCTLRQHCPAHESRWLELSGANSKCTNPRITEIIPVTGPREGGTKVTIRGENLGLEFRDIASHVKVAGVECSPLVDGYIPAEQIVCEMGEAKPSQHAGFVEICVAVCRPEFMARSSQLYYFMTLTLADLKPNRGPMSGGTQVTITGTNLNAGSNVVVMFGSQPCLFHRRSPSYIICNTTSSEEVLDMKVTVQVDRARIRQDLVFQYVEDPTIVRIEPEWSIVSGNTPIAVWGTHLDLIQNPQIRAKHGGKEHINICEVLNATEMTCQAPALALGPDHQSDLTERPEEFGFILDNVQSLLILNKTNFTYYPNPVFEAFSPSGILELKPGTPIILKGKNLIPPVAGGNVKLNYTVLVGEKPCTVTVSDVQLLCESPNLIGRHKVMARVGGMEYSPGMVYIAPDSPLSLPAIVSIAVAGGLLIIFIVAVLIAYKRKSRESDLTLKRLQMQMDNLESRVALECKEAFAELQTDIHELTSDLDGAGIPFLDYRTYTMRVLFPGIEDHPVLRDLEVPGYRQERVEKGLKLFAQLINNKVFLLSFIRTLESQRSFSMRDRGNVASLIMTVLQSKLEYATDVLKQLLADLIDKNLESKNHPKLLLRRTESVAEKMLTNWFTFLLYKFLKECAGEPLFSLFCAIKQQMEKGPIDAITGEARYSLSEDKLIRQQIEYKTLVLSCVSPDNVNSPEVPVKILNCDTITQVKEKILDAIFKNVPCSHRPKAADMDLEWRQGSGARMILQDEDITTKIENDWKRLNTVAHYQVPDGSVVALVSKQVTAYNAVNNSTVSRTSASKYENMIRYTGSPDSLRSRTPMITPDLESGVKLWHLVKNHEHGDQKEGDRGSKMVSEIYLTRLLATKGTLQKFVDDLFETIFSTAHRGSALPLAIKYMFDFLDEQADKHGIHDPHVRHTWKSNCLPLRFWVNMIKNPQFVFDIHKNSITDACLSVVAQTFMDSCSTSEHRLGKDSPSNKLLYAKDIPSYKNWVERYYSDIGKMPAISDQDMNAYLAEQSRMHMNEFNTMSALSEIFSYVGKYSEEILGPLDHDDQCGKQKLAYKLEQVITLMSLDS.

Positions 1-23 are cleaved as a signal peptide; that stretch reads MKAMPWNWTCLLSHLLVVGMGSS. Residues 24–506 enclose the Sema domain; it reads TLLPRQPPQL…SERQLTRVPV (483 aa). Residues 24–1236 lie on the Extracellular side of the membrane; the sequence is TLLPRQPPQL…IAPDSPLSLP (1213 aa). Cystine bridges form between C94–C103, C129–C137, C283–C404, C299–C355, C373–C392, C509–C526, C515–C557, C518–C535, C529–C541, and C592–C611. Positions 508–558 constitute a PSI 1 domain; the sequence is SCGQYRSCGECLGSGDPHCGWCVLHNTCTRKERCERSREPRRFASEMKQCV. The N-linked (GlcNAc...) asparagine glycan is linked to N654. PSI domains follow at residues 654–701 and 802–855; these read NCSV…EDCP and KCGA…SKCT. 4 IPT/TIG domains span residues 857–951, 953–1036, 1039–1138, and 1141–1229; these read PRIT…YYFM, LTLA…FQYV, PTIV…FTYY, and PVFE…YIAP. N1006, N1131, and N1179 each carry an N-linked (GlcNAc...) asparagine glycan. A helical membrane pass occupies residues 1237–1257; it reads AIVSIAVAGGLLIIFIVAVLI. Residues 1258–1893 are Cytoplasmic-facing; sequence AYKRKSRESD…QVITLMSLDS (636 aa). K1349 carries the N6-acetyllysine modification.

It belongs to the plexin family. In terms of assembly, interacts with NRP1 and NRP2. Expressed in the developing nervous system. Widely expressed in both the central and peripheral nervous systems. Expressed in the peripheral ganglia, somatosensory, olfactory, visual, auditory and equilibrium systems.

Its subcellular location is the cell membrane. Coreceptor for SEMA3A. Necessary for signaling by class 3 semaphorins and subsequent remodeling of the cytoskeleton. Plays a role in axon guidance in the developing nervous system. Class 3 semaphorins bind to a complex composed of a neuropilin and a plexin. The plexin modulates the affinity of the complex for specific semaphorins, and its cytoplasmic domain is required for the activation of down-stream signaling events in the cytoplasm. This chain is Plexin-A4 (Plxna4), found in Mus musculus (Mouse).